Consider the following 481-residue polypeptide: UDP-N-acetylmuramoyl-L-alanyl-D-glutamate--L-lysine ligase (481 aa).

Serine 42 is a binding site for UDP-N-acetyl-alpha-D-muramoyl-L-alanyl-D-glutamate. 118 to 124 (GTKGKTT) provides a ligand contact to ATP. UDP-N-acetyl-alpha-D-muramoyl-L-alanyl-D-glutamate-binding positions include 160-161 (TT), serine 187, and arginine 195. At lysine 229 the chain carries N6-carboxylysine. The L-lysine recognition motif motif lies at 404–407 (DDPN).

It belongs to the MurCDEF family. MurE subfamily. Carboxylation is probably crucial for Mg(2+) binding and, consequently, for the gamma-phosphate positioning of ATP.

The protein resides in the cytoplasm. The catalysed reaction is UDP-N-acetyl-alpha-D-muramoyl-L-alanyl-D-glutamate + L-lysine + ATP = UDP-N-acetyl-alpha-D-muramoyl-L-alanyl-gamma-D-glutamyl-L-lysine + ADP + phosphate + H(+). It functions in the pathway cell wall biogenesis; peptidoglycan biosynthesis. In terms of biological role, catalyzes the addition of L-lysine to the nucleotide precursor UDP-N-acetylmuramoyl-L-alanyl-D-glutamate (UMAG) in the biosynthesis of bacterial cell-wall peptidoglycan. The sequence is that of UDP-N-acetylmuramoyl-L-alanyl-D-glutamate--L-lysine ligase from Streptococcus pneumoniae (strain ATCC BAA-255 / R6).